The chain runs to 458 residues: Argininosuccinate lyase (458 aa).

It belongs to the lyase 1 family. Argininosuccinate lyase subfamily.

The protein resides in the cytoplasm. The enzyme catalyses 2-(N(omega)-L-arginino)succinate = fumarate + L-arginine. Its pathway is amino-acid biosynthesis; L-arginine biosynthesis; L-arginine from L-ornithine and carbamoyl phosphate: step 3/3. The sequence is that of Argininosuccinate lyase from Salmonella paratyphi A (strain ATCC 9150 / SARB42).